Consider the following 117-residue polypeptide: Large ribosomal subunit protein bL20 (117 aa).

Belongs to the bacterial ribosomal protein bL20 family.

Binds directly to 23S ribosomal RNA and is necessary for the in vitro assembly process of the 50S ribosomal subunit. It is not involved in the protein synthesizing functions of that subunit. This is Large ribosomal subunit protein bL20 from Vibrio atlanticus (strain LGP32) (Vibrio splendidus (strain Mel32)).